A 499-amino-acid chain; its full sequence is Spore germination protein GerQA (499 aa).

3 helical membrane passes run 285–305 (LFAFIFSVLTTPLYVSILTYH), 376–396 (SNVLIIIVALSALSSFTAPIY), and 409–429 (FIISAHLLGLLGIVLTSSLLL).

It belongs to the GerABKA family.

The protein resides in the membrane. Its function is as follows. Required for the germination response to inosine. Has no role in L-alanine germination. The polypeptide is Spore germination protein GerQA (gerQA) (Bacillus cereus).